Here is a 424-residue protein sequence, read N- to C-terminus: STAM-binding protein (424 aa).

Positions 1–127 (MSDHADVSLP…YEQYKERKKK (127 aa)) are interaction with CHMP3. 2 positions are modified to phosphoserine: Ser-2 and Ser-48. Positions 227–231 (PAKPP) are interaction with STAM. Ser-243 carries the post-translational modification Phosphoserine. Residues 257–388 (IVVPRNLCSE…LTDYGLQEIS (132 aa)) form the MPN domain. 7 residues coordinate Zn(2+): His-335, His-337, Asp-348, His-350, Cys-390, His-396, and His-398. The short motif at 335–348 (HTHPTQTAFLSSVD) is the JAMM motif element.

Belongs to the peptidase M67C family. Interacts with STAM. Interacts with SMAD6 and SMAD7. Interacts with CHMP3; the interaction appears to relieve the autoinhibition of CHMP3. Interacts with SMURF2 and RNF11; this interaction promotes ubiquitination. Zn(2+) serves as cofactor. Phosphorylated after BMP type I receptor activation. In terms of processing, ubiquitinated by SMURF2 in the presence of RNF11.

The protein resides in the nucleus. It is found in the membrane. It localises to the cytoplasm. Its subcellular location is the early endosome. With respect to regulation, inhibited by N-ethylmaleimide. Zinc metalloprotease that specifically cleaves 'Lys-63'-linked polyubiquitin chains. Does not cleave 'Lys-48'-linked polyubiquitin chains. Plays a role in signal transduction for cell growth and MYC induction mediated by IL-2 and GM-CSF. Potentiates BMP (bone morphogenetic protein) signaling by antagonizing the inhibitory action of SMAD6 and SMAD7. Has a key role in regulation of cell surface receptor-mediated endocytosis and ubiquitin-dependent sorting of receptors to lysosomes. Endosomal localization of STAMBP is required for efficient EGFR degradation but not for its internalization. Involved in the negative regulation of PI3K-AKT-mTOR and RAS-MAP signaling pathways. This Rattus norvegicus (Rat) protein is STAM-binding protein (Stambp).